Reading from the N-terminus, the 224-residue chain is Uridylate kinase (224 aa).

Position 8-12 (8-12 (KITGK)) interacts with ATP. Gly-43 provides a ligand contact to UMP. ATP-binding residues include Gly-44 and Arg-48. UMP contacts are provided by residues Asp-66 and 114–120 (LIPGQST). Ser-140, Tyr-146, and Asp-149 together coordinate ATP.

This sequence belongs to the UMP kinase family. In terms of assembly, homohexamer.

The protein resides in the cytoplasm. The enzyme catalyses UMP + ATP = UDP + ADP. The protein operates within pyrimidine metabolism; CTP biosynthesis via de novo pathway; UDP from UMP (UMPK route): step 1/1. Inhibited by UTP. Catalyzes the reversible phosphorylation of UMP to UDP. In Staphylothermus marinus (strain ATCC 43588 / DSM 3639 / JCM 9404 / F1), this protein is Uridylate kinase.